Consider the following 37-residue polypeptide: MSDINATRLPLFFPPDFRPPCVGDADNFTLTRGENLC.

The propeptide occupies 1–10; that stretch reads MSDINATRLP. Residues 11–20 constitute a cross-link (cyclopeptide (Leu-Pro)); the sequence is LFFPPDFRPP. Positions 21–37 are excised as a propeptide; the sequence is CVGDADNFTLTRGENLC.

This sequence belongs to the MSDIN fungal toxin family. Processed by the macrocyclase-peptidase enzyme POPB to yield a toxic cyclic decapeptide. POPB first removes 10 residues from the N-terminus. Conformational trapping of the remaining peptide forces the enzyme to release this intermediate rather than proceed to macrocyclization. The enzyme rebinds the remaining peptide in a different conformation and catalyzes macrocyclization of the N-terminal 10 residues. In terms of tissue distribution, expressed in basidiocarps.

Functionally, probable toxin that belongs to the MSDIN-like toxin family responsible for a large number of food poisoning cases and deaths. The polypeptide is MSDIN-like toxin proprotein 5 (Amanita exitialis (Guangzhou destroying angel)).